Reading from the N-terminus, the 245-residue chain is Ubiquinone biosynthesis O-methyltransferase (245 aa).

4 residues coordinate S-adenosyl-L-methionine: Arg-44, Gly-64, Asp-85, and Met-129.

It belongs to the methyltransferase superfamily. UbiG/COQ3 family.

The catalysed reaction is a 3-demethylubiquinol + S-adenosyl-L-methionine = a ubiquinol + S-adenosyl-L-homocysteine + H(+). It carries out the reaction a 3-(all-trans-polyprenyl)benzene-1,2-diol + S-adenosyl-L-methionine = a 2-methoxy-6-(all-trans-polyprenyl)phenol + S-adenosyl-L-homocysteine + H(+). Its pathway is cofactor biosynthesis; ubiquinone biosynthesis. Functionally, O-methyltransferase that catalyzes the 2 O-methylation steps in the ubiquinone biosynthetic pathway. This chain is Ubiquinone biosynthesis O-methyltransferase, found in Proteus mirabilis (strain HI4320).